The primary structure comprises 286 residues: Deleted in azoospermia-like-A (286 aa).

An RRM domain is found at 33–114; the sequence is NTVFVGGIDI…PAIRKICTYV (82 aa). In terms of domain architecture, DAZ spans 155–180; it reads ACPYPSSPPMAIQQIPVGCQQPGYFQ.

The protein belongs to the RRM DAZ family. As to quaternary structure, interacts with the C-terminus of pabp1 and with epabp. Prior to oocyte maturation, found in a complex with epabp and pum2 proteins and spdy1 mRNA; pum2 dissociates from the complex during maturation. Germ-line specific. Oocyte mRNA expression is first restricted to the granulo-fibrillar material (GFM) of the mitochondrial cloud and then to the oocyte germ plasm at the vegetal cortex. Remains an mRNA component of the germ plasm until the neurula stage. In 2-8 cell embryos, expressed in the germ plasm matrix between germinal granules and mitochondria. Expressed in primordial germ cells (PGCs) later in embryogenesis. In addition to the ovaries of adult females, expressed in the testis of adult and juvenile males in spermatogonia and spermatocytes. The protein is restricted to the embryonic germ plasm and primordial germ cells.

It is found in the cytoplasm. RNA-binding protein that is required for primordial germ cell (PGC) differentiation and indirectly necessary for the migration of PGCs through the endoderm. May promote meiotic cell division during spermatogenesis. Shows a preference for G- and U-rich RNAs and probably binds the 3'-UTR of target mRNAs. Stimulates the initiation of translation of mRNAs through the recruitment of poly(A)-binding proteins (PABPs). The chain is Deleted in azoospermia-like-A (dazl-a) from Xenopus laevis (African clawed frog).